The primary structure comprises 370 residues: MQQDKVNLLGLNQKAIEDFFISIGEKKFHARQVFKWIHKKGVIDFDAMTDLGKNLRHKLKEKAQITIPKVVFSKASKDGTHKWLIDVGGSAVETVFILAEGRGTLCVSSQVGCTLNCSFCSTGKQGFNRNLSAAEVIAQLWIAARTLSKTDGEHDFTVTNIVMMGMGEPLMNFENVVPAMDIMMDDLAYGLSRRKVTLSTSGVVPRIYDLLEQSGVSLAVSLHAPNDMLRNEIVPINKKYNIDELLEACKLYAQKGPHKHITFEYTLIEEVNDNLSDAEELVALLKSREVPAKINLIPFNPYPGTPYKKPSNNRIHRFKEFLQHNGFVTTVRKTRGDDIDAACGQLAGDVMDKTNRKQRYLKKLGDTNAN.

Catalysis depends on glutamate 93, which acts as the Proton acceptor. In terms of domain architecture, Radical SAM core spans alanine 99–aspartate 337. An intrachain disulfide couples cysteine 106 to cysteine 343. The [4Fe-4S] cluster site is built by cysteine 113, cysteine 117, and cysteine 120. Residues glycine 167 to glutamate 168, serine 199, serine 221 to histidine 223, and asparagine 300 contribute to the S-adenosyl-L-methionine site. Cysteine 343 serves as the catalytic S-methylcysteine intermediate.

The protein belongs to the radical SAM superfamily. RlmN family. [4Fe-4S] cluster is required as a cofactor.

Its subcellular location is the cytoplasm. It catalyses the reaction adenosine(2503) in 23S rRNA + 2 reduced [2Fe-2S]-[ferredoxin] + 2 S-adenosyl-L-methionine = 2-methyladenosine(2503) in 23S rRNA + 5'-deoxyadenosine + L-methionine + 2 oxidized [2Fe-2S]-[ferredoxin] + S-adenosyl-L-homocysteine. It carries out the reaction adenosine(37) in tRNA + 2 reduced [2Fe-2S]-[ferredoxin] + 2 S-adenosyl-L-methionine = 2-methyladenosine(37) in tRNA + 5'-deoxyadenosine + L-methionine + 2 oxidized [2Fe-2S]-[ferredoxin] + S-adenosyl-L-homocysteine. Its function is as follows. Specifically methylates position 2 of adenine 2503 in 23S rRNA and position 2 of adenine 37 in tRNAs. m2A2503 modification seems to play a crucial role in the proofreading step occurring at the peptidyl transferase center and thus would serve to optimize ribosomal fidelity. The protein is Dual-specificity RNA methyltransferase RlmN of Francisella tularensis subsp. tularensis (strain FSC 198).